The chain runs to 331 residues: Protoheme IX farnesyltransferase (331 aa).

A run of 8 helical transmembrane segments spans residues 63 to 83 (LACT…LNCL), 109 to 129 (SVFI…VSGV), 132 to 152 (LAAG…TAFL), 160 to 180 (IVFG…AAAG), 188 to 208 (WLFS…AILL), 215 to 235 (VGIP…AISV), 241 to 261 (VFLS…YGIL), and 294 to 314 (ILYM…VSIV).

It belongs to the UbiA prenyltransferase family. Protoheme IX farnesyltransferase subfamily.

It is found in the cell inner membrane. The catalysed reaction is heme b + (2E,6E)-farnesyl diphosphate + H2O = Fe(II)-heme o + diphosphate. Its pathway is porphyrin-containing compound metabolism; heme O biosynthesis; heme O from protoheme: step 1/1. Converts heme B (protoheme IX) to heme O by substitution of the vinyl group on carbon 2 of heme B porphyrin ring with a hydroxyethyl farnesyl side group. This is Protoheme IX farnesyltransferase from Prochlorococcus marinus (strain NATL2A).